Reading from the N-terminus, the 138-residue chain is Acidic phospholipase A2 daboiatoxin A chain (138 aa).

The signal sequence occupies residues 1 to 16 (MRTLWIMAVCLIGVEG). 7 disulfide bridges follow: cysteine 42–cysteine 131, cysteine 44–cysteine 60, cysteine 59–cysteine 111, cysteine 65–cysteine 138, cysteine 66–cysteine 104, cysteine 73–cysteine 97, and cysteine 91–cysteine 102. Ca(2+)-binding residues include tyrosine 43, glycine 45, and glycine 47. Histidine 63 is a catalytic residue. Aspartate 64 is a binding site for Ca(2+). Aspartate 105 is a catalytic residue.

This sequence belongs to the phospholipase A2 family. Group II subfamily. D49 sub-subfamily. As to quaternary structure, heterodimer of A and B chain; non-covalently linked. The acidic protein (B chain) has phospholipase A2 activity and the A chain weakly inhibits the B chain enzymatic activity but potentiates its lethal potency. It depends on Ca(2+) as a cofactor. Expressed by the venom gland.

The protein localises to the secreted. It carries out the reaction a 1,2-diacyl-sn-glycero-3-phosphocholine + H2O = a 1-acyl-sn-glycero-3-phosphocholine + a fatty acid + H(+). In terms of biological role, heterodimer (A and B chains): phospholipase A2 that acts as a presynaptic neurotoxin and shows a PLA2 activity of 1377 umol/min/mg. In vivo, induces edema and produces neurotoxic symptoms in mice. Also exhibits indirect hemolysis, a strong myonecrotic activity and cytotoxicity. PLA2 catalyzes the calcium-dependent hydrolysis of the 2-acyl groups in 3-sn-phosphoglycerides. Monomer: Snake venom phospholipase A2 (PLA2) that shows a PLA2 activity of 578 umol/min/mg. This is Acidic phospholipase A2 daboiatoxin A chain from Daboia siamensis (Eastern Russel's viper).